The chain runs to 806 residues: Glycerol-3-phosphate acyltransferase (806 aa).

The HXXXXD motif signature appears at 305-310 (CHRSHM).

This sequence belongs to the GPAT/DAPAT family.

It is found in the cell inner membrane. It carries out the reaction sn-glycerol 3-phosphate + an acyl-CoA = a 1-acyl-sn-glycero-3-phosphate + CoA. Its pathway is phospholipid metabolism; CDP-diacylglycerol biosynthesis; CDP-diacylglycerol from sn-glycerol 3-phosphate: step 1/3. This Salmonella agona (strain SL483) protein is Glycerol-3-phosphate acyltransferase.